The sequence spans 539 residues: CTP synthase (539 aa).

An amidoligase domain region spans residues 1–268 (MSFKSIFLTG…SDFLLNKLGF (268 aa)). Ser-14 is a binding site for CTP. UTP is bound at residue Ser-14. 15-20 (SLGKGL) lines the ATP pocket. Residue Tyr-55 participates in L-glutamine binding. Asp-72 lines the ATP pocket. The Mg(2+) site is built by Asp-72 and Glu-142. CTP is bound by residues 149 to 151 (DIE), 188 to 193 (KTKPTQ), and Lys-224. UTP contacts are provided by residues 188 to 193 (KTKPTQ) and Lys-224. Residues 294 to 532 (RIGLVGKYLE…IRAAKAYSLE (239 aa)) form the Glutamine amidotransferase type-1 domain. Gly-353 serves as a coordination point for L-glutamine. Residue Cys-380 is the Nucleophile; for glutamine hydrolysis of the active site. Residues 381–384 (LGMQ), Glu-404, and Arg-460 contribute to the L-glutamine site. Active-site residues include His-505 and Glu-507.

This sequence belongs to the CTP synthase family. As to quaternary structure, homotetramer.

It carries out the reaction UTP + L-glutamine + ATP + H2O = CTP + L-glutamate + ADP + phosphate + 2 H(+). The catalysed reaction is L-glutamine + H2O = L-glutamate + NH4(+). It catalyses the reaction UTP + NH4(+) + ATP = CTP + ADP + phosphate + 2 H(+). Its pathway is pyrimidine metabolism; CTP biosynthesis via de novo pathway; CTP from UDP: step 2/2. Its activity is regulated as follows. Allosterically activated by GTP, when glutamine is the substrate; GTP has no effect on the reaction when ammonia is the substrate. The allosteric effector GTP functions by stabilizing the protein conformation that binds the tetrahedral intermediate(s) formed during glutamine hydrolysis. Inhibited by the product CTP, via allosteric rather than competitive inhibition. Its function is as follows. Catalyzes the ATP-dependent amination of UTP to CTP with either L-glutamine or ammonia as the source of nitrogen. Regulates intracellular CTP levels through interactions with the four ribonucleotide triphosphates. The sequence is that of CTP synthase from Chlamydia trachomatis serovar A (strain ATCC VR-571B / DSM 19440 / HAR-13).